A 592-amino-acid polypeptide reads, in one-letter code: Polyadenylate-binding protein, cytoplasmic and nuclear (592 aa).

Residues 1–10 (MSDITEKTAE) show a composition bias toward basic and acidic residues. The segment at 1-43 (MSDITEKTAEQLENLQINDDQQPAQSASAPSTSASESEASSVS) is disordered. Polar residues predominate over residues 11–20 (QLENLQINDD). Positions 21–43 (QQPAQSASAPSTSASESEASSVS) are enriched in low complexity. RRM domains follow at residues 50–128 (ASLY…WSER), 138–215 (GNIF…MHVP), 231–308 (TNIY…RAQK), and 334–411 (VNLF…IAQR). A PABC domain is found at 507 to 586 (NQFPRHQQQH…ALAAYENFKK (80 aa)).

Belongs to the polyadenylate-binding protein type-1 family.

It localises to the cytoplasm. The protein resides in the nucleus. Binds the poly(A) tail of mRNA. Appears to be an important mediator of the multiple roles of the poly(A) tail in mRNA biogenesis, stability and translation. In the nucleus, involved in both mRNA cleavage and polyadenylation. Is also required for efficient mRNA export to the cytoplasm. Acts in concert with a poly(A)-specific nuclease (PAN) to affect poly(A) tail shortening, which may occur concomitantly with either nucleocytoplasmic mRNA transport or translational initiation. In the cytoplasm, stimulates translation initiation and regulates mRNA decay through translation termination-coupled poly(A) shortening, probably mediated by PAN. This is Polyadenylate-binding protein, cytoplasmic and nuclear (PAB1) from Kluyveromyces lactis (strain ATCC 8585 / CBS 2359 / DSM 70799 / NBRC 1267 / NRRL Y-1140 / WM37) (Yeast).